The sequence spans 446 residues: MKAGANTPPKVGFVSLGCPKATVDSERILTQLRAEGYLLVGDYANADVVVVNTCGFIDAAVEESLEAIGEALDENGKVVVTGCLGAREGGDFVRGAHPKVLAVTGPNQAGAVLDAIHAALPPAHDPYTDLVPPQGLRLTPPHYAYLKISEGCNQSCSFCIIPSMRGKLVSRAPDDILREAEALVAGGAKELLVISQDTGAYGVDRKYRTAFHNGRPLKTRITDLCAALGELGVWVRLHYVYPYPHIDELLPLMAEGKILPYLDVPLQHGSPRILKAMRRPAAAEKTLDRILGWRQAVPDLIIRSTFIVGFPGETDADFAELLDFLRAAELDRVGCFAYSAVEGAPANAIAGAVPEPVKEERRAAFMAVQEAISRQRLQRRVGQRQRVLVDAMARGGRVIARSASDAPEIDGVVHLGKAAGLQVGDWVEVAITRADAHDLYGMVVSA.

The MTTase N-terminal domain maps to 9–121; it reads PKVGFVSLGC…VLDAIHAALP (113 aa). Residues C18, C54, C83, C152, C156, and C159 each contribute to the [4Fe-4S] cluster site. Positions 138 to 375 constitute a Radical SAM core domain; sequence LTPPHYAYLK…MAVQEAISRQ (238 aa). A TRAM domain is found at 378–445; it reads QRRVGQRQRV…AHDLYGMVVS (68 aa).

It belongs to the methylthiotransferase family. RimO subfamily. It depends on [4Fe-4S] cluster as a cofactor.

It is found in the cytoplasm. The enzyme catalyses L-aspartate(89)-[ribosomal protein uS12]-hydrogen + (sulfur carrier)-SH + AH2 + 2 S-adenosyl-L-methionine = 3-methylsulfanyl-L-aspartate(89)-[ribosomal protein uS12]-hydrogen + (sulfur carrier)-H + 5'-deoxyadenosine + L-methionine + A + S-adenosyl-L-homocysteine + 2 H(+). In terms of biological role, catalyzes the methylthiolation of an aspartic acid residue of ribosomal protein uS12. The protein is Ribosomal protein uS12 methylthiotransferase RimO of Acidithiobacillus ferrooxidans (strain ATCC 23270 / DSM 14882 / CIP 104768 / NCIMB 8455) (Ferrobacillus ferrooxidans (strain ATCC 23270)).